Consider the following 339-residue polypeptide: uncharacterized protein (339 aa).

Positions 54, 78, 101, 128, 213, and 217 each coordinate NADP(+). Tyr-213 serves as the catalytic Proton donor. Lys-217 (lowers pKa of active site Tyr) is an active-site residue.

The protein belongs to the short-chain dehydrogenases/reductases (SDR) family.

This is an uncharacterized protein from Schizosaccharomyces pombe (strain 972 / ATCC 24843) (Fission yeast).